Consider the following 143-residue polypeptide: Insertion element IS2 uncharacterized 16.4 kDa protein (143 aa).

The sequence is that of Insertion element IS2 uncharacterized 16.4 kDa protein from Escherichia coli.